The chain runs to 187 residues: Phosphatidylethanolamine-binding protein 1 (187 aa).

At Ala2 the chain carries N-acetylalanine; in peptide hippocampal cholinergic neurostimulating. Ser6 is modified (phosphoserine). At Thr42 the chain carries Phosphothreonine. A phosphoserine mark is found at Ser51, Ser52, Ser54, Ser98, and Ser132. Positions 93-134 (KGNDISSGTVLSDYVGSGPPSGTGLHRYVWLVYEQEQPLSCD) are interaction with RAF1.

This sequence belongs to the phosphatidylethanolamine-binding protein family. In terms of assembly, has a tendency to form dimers by disulfide cross-linking. Interacts with RAF1 and this interaction is enhanced if RAF1 is phosphorylated on residues 'Ser-338', 'Ser-339', 'Tyr-340' and 'Tyr-341'. Interacts with ALOX15; in response to IL13/interleukin-13, prevents the interaction of PEBP1 with RAF1 to activate the ERK signaling cascade. As to expression, HCNP is expressed in brain. Increased expression in aged senescence-accelerated mice.

It localises to the cytoplasm. Binds ATP, opioids and phosphatidylethanolamine. Has lower affinity for phosphatidylinositol and phosphatidylcholine. Serine protease inhibitor which inhibits thrombin, neuropsin and chymotrypsin but not trypsin, tissue type plasminogen activator and elastase. Inhibits the kinase activity of RAF1 by inhibiting its activation and by dissociating the RAF1/MEK complex and acting as a competitive inhibitor of MEK phosphorylation. Functionally, HCNP may be involved in the function of the presynaptic cholinergic neurons of the central nervous system. HCNP increases the production of choline acetyltransferase but not acetylcholinesterase. Seems to be mediated by a specific receptor. In Mus musculus (Mouse), this protein is Phosphatidylethanolamine-binding protein 1 (Pebp1).